We begin with the raw amino-acid sequence, 166 residues long: Twist-related protein (166 aa).

The segment covering 1 to 18 has biased composition (low complexity); the sequence is MMQEESSSPVSPVDSLSN. The tract at residues 1–83 is disordered; sequence MMQEESSSPV…RVMANVRERQ (83 aa). Positions 28 to 39 are enriched in basic residues; it reads SKRGCRKRRSAR. A compositionally biased stretch (polar residues) spans 57-75; that stretch reads ASSTGSSPQSFEELQSQRV. Positions 72-123 constitute a bHLH domain; sequence SQRVMANVRERQRTQSLNEAFSSLRKIIPTLPSDKLSKIQTLKLASRYIDFL.

In terms of assembly, efficient DNA binding requires dimerization with another bHLH protein. Homodimer. In terms of tissue distribution, subset of mesodermal cells.

The protein resides in the nucleus. Functionally, probable transcription factor, which may be involved, with other proteins, in establishing the pattern of cell type-specific gene expression in mesodermal cell subgroups. The sequence is that of Twist-related protein (twist1) from Xenopus laevis (African clawed frog).